The chain runs to 162 residues: Class I hydrophobin 3 (162 aa).

2 disulfides stabilise this stretch: Cys-36–Cys-150 and Cys-151–Cys-159.

This sequence belongs to the fungal hydrophobin family. As to quaternary structure, self-assembles to form functional amyloid fibrils called rodlets. Self-assembly into fibrillar rodlets occurs spontaneously at hydrophobic:hydrophilic interfaces and the rodlets further associate laterally to form amphipathic monolayers.

It is found in the secreted. The protein localises to the cell wall. In terms of biological role, aerial growth, conidiation, and dispersal of filamentous fungi in the environment rely upon a capability of their secreting small amphipathic proteins called hydrophobins (HPBs) with low sequence identity. Class I can self-assemble into an outermost layer of rodlet bundles on aerial cell surfaces, conferring cellular hydrophobicity that supports fungal growth, development and dispersal; whereas Class II form highly ordered films at water-air interfaces through intermolecular interactions but contribute nothing to the rodlet structure. The chain is Class I hydrophobin 3 from Coprinopsis cinerea (strain Okayama-7 / 130 / ATCC MYA-4618 / FGSC 9003) (Inky cap fungus).